The primary structure comprises 517 residues: Cobyric acid synthase (517 aa).

The region spanning 253–453 (EVEIAVIKLP…IHGILDNDSL (201 aa)) is the GATase cobBQ-type domain. The active-site Nucleophile is C334. The active site involves H445.

Belongs to the CobB/CobQ family. CobQ subfamily.

Its pathway is cofactor biosynthesis; adenosylcobalamin biosynthesis. Functionally, catalyzes amidations at positions B, D, E, and G on adenosylcobyrinic A,C-diamide. NH(2) groups are provided by glutamine, and one molecule of ATP is hydrogenolyzed for each amidation. The polypeptide is Cobyric acid synthase (Moorella thermoacetica (strain ATCC 39073 / JCM 9320)).